The sequence spans 362 residues: Thiol protease aleurain (362 aa).

The N-terminal stretch at M1 to A22 is a signal peptide. Residues S23 to A143 constitute a propeptide, activation peptide. Disulfide bonds link C165/C208 and C199/C241. C168 is an active-site residue. N188 carries an N-linked (GlcNAc...) asparagine glycan. N257 carries N-linked (GlcNAc...) asparagine glycosylation. The cysteines at positions 299 and 349 are disulfide-linked. Residues H308 and N328 contribute to the active site.

This sequence belongs to the peptidase C1 family.

The protein resides in the vacuole. It carries out the reaction Hydrolysis of proteins, acting as an aminopeptidase (notably, cleaving Arg-|-Xaa bonds) as well as an endopeptidase.. Functionally, may play a role in proteolysis leading to mobilization of nitrogen during senescence and starvation. The protein is Thiol protease aleurain of Hordeum vulgare (Barley).